We begin with the raw amino-acid sequence, 362 residues long: Protein ABHD12B (362 aa).

Belongs to the serine esterase family.

The chain is Protein ABHD12B from Homo sapiens (Human).